The chain runs to 266 residues: Signal peptidase I (266 aa).

At 1 to 20 (MQTDNTKSNTNKTAKQEWGS) the chain is on the cytoplasmic side. Residues 21–41 (FVFVICIALLIRILIMEPFTV) traverse the membrane as a helical segment. At 42 to 266 (PTGSMKATIL…IFRNLYNTDV (225 aa)) the chain is on the periplasmic side. Residues Ser-45 and Lys-108 contribute to the active site.

This sequence belongs to the peptidase S26 family.

The protein localises to the cell inner membrane. It carries out the reaction Cleavage of hydrophobic, N-terminal signal or leader sequences from secreted and periplasmic proteins.. The polypeptide is Signal peptidase I (lepB) (Rickettsia massiliae (strain Mtu5)).